The sequence spans 198 residues: UDP-N-acetylglucosamine transferase subunit ALG13 (198 aa).

This sequence belongs to the glycosyltransferase 28 family. Heterodimer with ALG14 to form a functional enzyme.

The protein localises to the endoplasmic reticulum. The enzyme catalyses an N-acetyl-alpha-D-glucosaminyl-diphospho-di-trans,poly-cis-dolichol + UDP-N-acetyl-alpha-D-glucosamine = an N,N'-diacetylchitobiosyl-diphospho-di-trans,poly-cis-dolichol + UDP + H(+). In terms of biological role, involved in protein N-glycosylation. Essential for the second step of the dolichol-linked oligosaccharide pathway. This chain is UDP-N-acetylglucosamine transferase subunit ALG13 (ALG13), found in Candida glabrata (strain ATCC 2001 / BCRC 20586 / JCM 3761 / NBRC 0622 / NRRL Y-65 / CBS 138) (Yeast).